The chain runs to 1433 residues: DNA-directed RNA polymerase subunit beta' (1433 aa).

Zn(2+) is bound by residues Cys-66, Cys-68, Cys-81, and Cys-84. 3 residues coordinate Mg(2+): Asp-473, Asp-475, and Asp-477. Cys-815, Cys-889, Cys-896, and Cys-899 together coordinate Zn(2+).

It belongs to the RNA polymerase beta' chain family. In terms of assembly, the RNAP catalytic core consists of 2 alpha, 1 beta, 1 beta' and 1 omega subunit. When a sigma factor is associated with the core the holoenzyme is formed, which can initiate transcription. It depends on Mg(2+) as a cofactor. The cofactor is Zn(2+).

It carries out the reaction RNA(n) + a ribonucleoside 5'-triphosphate = RNA(n+1) + diphosphate. Functionally, DNA-dependent RNA polymerase catalyzes the transcription of DNA into RNA using the four ribonucleoside triphosphates as substrates. This chain is DNA-directed RNA polymerase subunit beta', found in Porphyromonas gingivalis (strain ATCC BAA-308 / W83).